Consider the following 172-residue polypeptide: Translationally-controlled tumor protein homolog (172 aa).

The region spanning 1 to 172 (MIIFKDLLTG…FKHGLDEEKV (172 aa)) is the TCTP domain.

This sequence belongs to the TCTP family. Expressed by the venom gland.

The protein resides in the secreted. Functionally, venom protein that causes edema, enhances vascular permeability and is likely related to the inflammatory activity of the venom. This is Translationally-controlled tumor protein homolog from Loxosceles intermedia (Brown spider).